Reading from the N-terminus, the 129-residue chain is Fluoride-specific ion channel FluC (129 aa).

Helical transmembrane passes span 1–21 (MLMK…LGSA), 35–55 (GGLP…IGFI), 71–91 (LFLV…IFEN), and 105–125 (AYLA…TFFA). The Na(+) site is built by Gly-79 and Thr-82.

This sequence belongs to the fluoride channel Fluc/FEX (TC 1.A.43) family.

It is found in the cell inner membrane. The catalysed reaction is fluoride(in) = fluoride(out). Its activity is regulated as follows. Na(+) is not transported, but it plays an essential structural role and its presence is essential for fluoride channel function. Fluoride-specific ion channel. Important for reducing fluoride concentration in the cell, thus reducing its toxicity. The polypeptide is Fluoride-specific ion channel FluC (Chlorobium phaeobacteroides (strain DSM 266 / SMG 266 / 2430)).